Consider the following 511-residue polypeptide: Dopamine receptor 1 (511 aa).

A signal peptide spans 1–19 (MYTPHPFGFLIILVPMTNA). The Extracellular segment spans residues 20 to 142 (MRAIAAIAAG…EEPEPLSLVS (123 aa)). 5 N-linked (GlcNAc...) asparagine glycosylation sites follow: Asn-53, Asn-63, Asn-74, Asn-117, and Asn-123. The chain crosses the membrane as a helical span at residues 143-169 (IVVVGIFLSVLIFLSVAGNILVCLAIY). Residues 170-179 (TERSLRRIGN) are Cytoplasmic-facing. Residues 180 to 206 (LFLASLAIADLFVASLVMTFAGVNDLL) traverse the membrane as a helical segment. At 207–216 (GYWIFGAQFC) the chain is on the extracellular side. Cysteines 216 and 302 form a disulfide. The chain crosses the membrane as a helical span at residues 217–239 (DTWVAFDVMCSTASILNLCAISM). At 240–258 (DRYIHIKDPLRYGRWVTRR) the chain is on the cytoplasmic side. The helical transmembrane segment at 259-279 (VAVITIAAIWLLAAFVSFVPI) threads the bilayer. Over 280 to 310 (SLGIHRPDQPLIFEDNGKKYPTCALDLTPTY) the chain is Extracellular. The chain crosses the membrane as a helical span at residues 311 to 331 (AVVSSCISFYFPCVVMIGIYC). Residues 332–391 (RLYCYAQKHVKSIKAVTRPGEVAEKQRYKSIRRPKNQPKKFKVRNLHTHSSPYHVSDHKA) lie on the Cytoplasmic side of the membrane. Residues 392-412 (AVTVGVIMGVFLICWVPFFCV) form a helical membrane-spanning segment. Residues 413 to 427 (NITAAFCKTCIGGQT) lie on the Extracellular side of the membrane. A helical transmembrane segment spans residues 428 to 450 (FKILTWLGYSNSAFNPIIYSIFN). Residues 451 to 511 (KEFRDAFKRI…SAELEQVSAI (61 aa)) are Cytoplasmic-facing. 2 S-palmitoyl cysteine lipidation sites follow: Cys-468 and Cys-469.

This sequence belongs to the G-protein coupled receptor 1 family. In terms of tissue distribution, expressed in the larval and adult CNS in structures that mediate higher-order brain functions such as learning, memory and motor control: in the mushroom body neuropil and four unpaired neurons in each thoracic segment. The adult CNS has intense expression in the central complex, moderate expression in several neurosecretory cells, and weak expression in two unpaired neurons in the mesothoracic neuromere. Also seen in the somata of the optic lobes.

It is found in the cell membrane. In terms of biological role, receptor for dopamine. The activity of this receptor is mediated by G proteins which activate adenylyl cyclase. Might be involved in the processing of visual information and/or visual learning. Important for Pavlovian conditioning: required in the mushroom body as a receptor conveying unconditional stimuli information, has a role in memory formation for aversive and appetitive learning. Sleep-deprivation-induced impairments in learning can be partially explained through alterations in dopamine signaling, Dop1R1 expression levels are reduced; sleep may have a role in restoring dopamine homeostasis. This chain is Dopamine receptor 1 (Dop1R1), found in Drosophila melanogaster (Fruit fly).